The primary structure comprises 203 residues: tRNA (pseudouridine(54)-N(1))-methyltransferase (203 aa).

The S-adenosyl-L-methionine site is built by L135 and G156.

The protein belongs to the methyltransferase superfamily. TrmY family. As to quaternary structure, homodimer.

It is found in the cytoplasm. The enzyme catalyses pseudouridine(54) in tRNA + S-adenosyl-L-methionine = N(1)-methylpseudouridine(54) in tRNA + S-adenosyl-L-homocysteine + H(+). Its function is as follows. Specifically catalyzes the N1-methylation of pseudouridine at position 54 (Psi54) in tRNAs. The chain is tRNA (pseudouridine(54)-N(1))-methyltransferase from Thermococcus onnurineus (strain NA1).